The chain runs to 363 residues: U-box domain-containing protein 62 (363 aa).

The segment at 74–117 (KPIIGNPNDSGGSDGEDDVDVEEEDEDDDLDGNEGDIGMNKDAG) is disordered. Residues 87–107 (DGEDDVDVEEEDEDDDLDGNE) show a composition bias toward acidic residues. The region spanning 181-253 (SLRTILSDPT…QAFCREENSQ (73 aa)) is the U-box domain. The disordered stretch occupies residues 343 to 363 (AKAPEDPSAKATPNKMVSNWL).

The enzyme catalyses S-ubiquitinyl-[E2 ubiquitin-conjugating enzyme]-L-cysteine + [acceptor protein]-L-lysine = [E2 ubiquitin-conjugating enzyme]-L-cysteine + N(6)-ubiquitinyl-[acceptor protein]-L-lysine.. It functions in the pathway protein modification; protein ubiquitination. Functions as an E3 ubiquitin ligase. The sequence is that of U-box domain-containing protein 62 (PUB62) from Arabidopsis thaliana (Mouse-ear cress).